Here is a 324-residue protein sequence, read N- to C-terminus: Ribosomal RNA small subunit methyltransferase H (324 aa).

S-adenosyl-L-methionine contacts are provided by residues 40 to 42 (AGH), D60, L94, D108, and H115. The disordered stretch occupies residues 301 to 324 (EEMKVNTRSRSAKLRVAERTGEDG). Over residues 315–324 (RVAERTGEDG) the composition is skewed to basic and acidic residues.

It belongs to the methyltransferase superfamily. RsmH family.

The protein localises to the cytoplasm. The enzyme catalyses cytidine(1402) in 16S rRNA + S-adenosyl-L-methionine = N(4)-methylcytidine(1402) in 16S rRNA + S-adenosyl-L-homocysteine + H(+). In terms of biological role, specifically methylates the N4 position of cytidine in position 1402 (C1402) of 16S rRNA. This is Ribosomal RNA small subunit methyltransferase H from Maridesulfovibrio salexigens (strain ATCC 14822 / DSM 2638 / NCIMB 8403 / VKM B-1763) (Desulfovibrio salexigens).